Consider the following 213-residue polypeptide: Motile sperm domain-containing protein 1 (213 aa).

An MSP domain is found at 16-143; that stretch reads PVFVFPTELI…KEHLTESVFF (128 aa). The next 2 helical transmembrane spans lie at 159–179 and 191–211; these read SLLT…PTLG and LSVN…MAIL. Residues 205-208 carry the Nuclear export signal motif; that stretch reads LITM.

It localises to the endoplasmic reticulum membrane. The protein resides in the golgi apparatus membrane. Its function is as follows. Plays a role in differentiation and/or proliferation of mesenchymal stem cells. Proposed to be involved in epithelial-to-mesenchymal transition (EMT). However, another study suggests that it is not required for EMT or stem cell self-renewal and acts during later stages of differentiation. This chain is Motile sperm domain-containing protein 1 (Mospd1), found in Rattus norvegicus (Rat).